The chain runs to 480 residues: RNA-splicing ligase RtcB homolog (480 aa).

Mn(2+)-binding residues include Asp93, Cys96, His202, His234, and His328. 201-205 (NHYTE) contacts GMP. GMP is bound by residues 328-329 (HN), 377-380 (GGTM), Ser384, 403-406 (HGAG), and Lys479. Residue His403 is the GMP-histidine intermediate of the active site.

This sequence belongs to the RtcB family. Catalytic component of the tRNA-splicing ligase complex. It depends on Mn(2+) as a cofactor.

It catalyses the reaction a 3'-end 3'-phospho-ribonucleotide-RNA + a 5'-end dephospho-ribonucleoside-RNA + GTP = a ribonucleotidyl-ribonucleotide-RNA + GMP + diphosphate. It carries out the reaction a 3'-end 2',3'-cyclophospho-ribonucleotide-RNA + a 5'-end dephospho-ribonucleoside-RNA + GTP + H2O = a ribonucleotidyl-ribonucleotide-RNA + GMP + diphosphate + H(+). Its function is as follows. Catalytic subunit of the tRNA-splicing ligase complex that acts by directly joining spliced tRNA halves to mature-sized tRNAs by incorporating the precursor-derived splice junction phosphate into the mature tRNA as a canonical 3',5'-phosphodiester. May act as an RNA ligase with broad substrate specificity, and may function toward other RNAs. The protein is RNA-splicing ligase RtcB homolog of Thalassiosira pseudonana (Marine diatom).